A 63-amino-acid polypeptide reads, in one-letter code: UPF0434 protein GDI0182/Gdia_2252 (63 aa).

Belongs to the UPF0434 family.

This is UPF0434 protein GDI0182/Gdia_2252 from Gluconacetobacter diazotrophicus (strain ATCC 49037 / DSM 5601 / CCUG 37298 / CIP 103539 / LMG 7603 / PAl5).